Here is a 305-residue protein sequence, read N- to C-terminus: HTH-type transcriptional activator BauR (305 aa).

The HTH lysR-type domain occupies 15–72; the sequence is FDIRLLRIFKTIVECGSFSAAESTLGLSRSAISLHMGDLEKRLGMRLCQRGRAGFALT.

This sequence belongs to the LysR transcriptional regulatory family.

In terms of biological role, involved in the degradation of beta-alanine. BauR activates the transcription of the bauABCD operon. The sequence is that of HTH-type transcriptional activator BauR (bauR) from Pseudomonas aeruginosa (strain ATCC 15692 / DSM 22644 / CIP 104116 / JCM 14847 / LMG 12228 / 1C / PRS 101 / PAO1).